Reading from the N-terminus, the 393-residue chain is NAD(P)H-quinone oxidoreductase subunit H, chloroplastic (393 aa).

Belongs to the complex I 49 kDa subunit family. As to quaternary structure, NDH is composed of at least 16 different subunits, 5 of which are encoded in the nucleus.

The protein localises to the plastid. Its subcellular location is the chloroplast thylakoid membrane. The catalysed reaction is a plastoquinone + NADH + (n+1) H(+)(in) = a plastoquinol + NAD(+) + n H(+)(out). The enzyme catalyses a plastoquinone + NADPH + (n+1) H(+)(in) = a plastoquinol + NADP(+) + n H(+)(out). In terms of biological role, NDH shuttles electrons from NAD(P)H:plastoquinone, via FMN and iron-sulfur (Fe-S) centers, to quinones in the photosynthetic chain and possibly in a chloroplast respiratory chain. The immediate electron acceptor for the enzyme in this species is believed to be plastoquinone. Couples the redox reaction to proton translocation, and thus conserves the redox energy in a proton gradient. This chain is NAD(P)H-quinone oxidoreductase subunit H, chloroplastic, found in Hordeum vulgare (Barley).